Reading from the N-terminus, the 1244-residue chain is Alpha-protein kinase 1 (1244 aa).

ADP-D-glycero-beta-D-manno-heptose contacts are provided by residues Phe61, Gln67, Arg116, Arg150 to Arg153, Asp231, Lys233, Ser236 to Thr237, and Phe295. 4 disordered regions span residues Leu650 to Ser675, Val701 to Ser737, Val757 to Ala798, and Asn824 to Ala848. A compositionally biased stretch (polar residues) spans Glu652 to Ser675. Residues Ser713–Ser726 are compositionally biased toward low complexity. Residues Val757–Glu771 are compositionally biased toward basic and acidic residues. Positions Pro787–Ala798 are enriched in acidic residues. The Alpha-type protein kinase domain occupies Lys1017 to Pro1237.

Belongs to the protein kinase superfamily. Alpha-type protein kinase family. ALPK subfamily. Highly expressed in liver. Expressed in the optic nerve and retinal pigmented epithelium. Lower expression is observed in the macula and extramacular retina.

It is found in the cytoplasm. Its subcellular location is the cytosol. The protein resides in the cytoskeleton. The protein localises to the spindle pole. It localises to the microtubule organizing center. It is found in the centrosome. Its subcellular location is the cell projection. The protein resides in the cilium. It carries out the reaction L-seryl-[protein] + ATP = O-phospho-L-seryl-[protein] + ADP + H(+). The enzyme catalyses L-threonyl-[protein] + ATP = O-phospho-L-threonyl-[protein] + ADP + H(+). With respect to regulation, serine/threonine-protein kinase activity is stimulated upon ADP-D-glycero-beta-D-manno-heptose (ADP-Heptose)-binding. Functionally, serine/threonine-protein kinase that detects bacterial pathogen-associated molecular pattern metabolites (PAMPs) and initiates an innate immune response, a critical step for pathogen elimination and engagement of adaptive immunity. Specifically recognizes and binds ADP-D-glycero-beta-D-manno-heptose (ADP-Heptose), a potent PAMP present in all Gram-negative and some Gram-positive bacteria. ADP-Heptose-binding stimulates its kinase activity to phosphorylate and activate TIFA, triggering pro-inflammatory NF-kappa-B signaling. May be involved in monosodium urate monohydrate (MSU)-induced inflammation by mediating phosphorylation of unconventional myosin MYO9A. May also play a role in apical protein transport by mediating phosphorylation of unconventional myosin MYO1A. May play a role in ciliogenesis. The protein is Alpha-protein kinase 1 of Homo sapiens (Human).